We begin with the raw amino-acid sequence, 274 residues long: MAVIKMKPTSPGRRGVVKISRDHLYKGEPFAPLLEPQFQHAGRNNNGHITTRHKGGGHKHHYRVVDFLRTKDGIPAKVERIEYDPNRSAHIALVCYADGERRYIIAPRGLEVGASIMSGAEAPIRVGNTLPIRNIPVGSIVHCIELQIGKGAQIVRSAGTSATLLAREGIYAQVRMRSGEVRKIHIECRATLGQVANEEHSLRRLGKAGAKRWKGIRPTVRGVVMNPVDHPHGGGEGKTGEGRHPVDPWGNLTKGYRTRNNKRTQVMIVSRRKK.

Residues Val-223–Tyr-256 are disordered. The segment covering Asp-229–Val-246 has biased composition (basic and acidic residues).

Belongs to the universal ribosomal protein uL2 family. As to quaternary structure, part of the 50S ribosomal subunit. Forms a bridge to the 30S subunit in the 70S ribosome.

In terms of biological role, one of the primary rRNA binding proteins. Required for association of the 30S and 50S subunits to form the 70S ribosome, for tRNA binding and peptide bond formation. It has been suggested to have peptidyltransferase activity; this is somewhat controversial. Makes several contacts with the 16S rRNA in the 70S ribosome. The chain is Large ribosomal subunit protein uL2 from Albidiferax ferrireducens (strain ATCC BAA-621 / DSM 15236 / T118) (Rhodoferax ferrireducens).